A 219-amino-acid polypeptide reads, in one-letter code: Cytidylate kinase (219 aa).

Position 10 to 18 (10 to 18 (GPAAAGKST)) interacts with ATP.

Belongs to the cytidylate kinase family. Type 1 subfamily.

It localises to the cytoplasm. The catalysed reaction is CMP + ATP = CDP + ADP. The enzyme catalyses dCMP + ATP = dCDP + ADP. In Staphylococcus aureus (strain MRSA252), this protein is Cytidylate kinase.